Here is a 71-residue protein sequence, read N- to C-terminus: Small ribosomal subunit protein bS18 (71 aa).

Belongs to the bacterial ribosomal protein bS18 family. In terms of assembly, part of the 30S ribosomal subunit. Forms a tight heterodimer with protein bS6.

Binds as a heterodimer with protein bS6 to the central domain of the 16S rRNA, where it helps stabilize the platform of the 30S subunit. This Microcystis aeruginosa (strain NIES-843 / IAM M-2473) protein is Small ribosomal subunit protein bS18.